The chain runs to 247 residues: Carboxy-S-adenosyl-L-methionine synthase (247 aa).

S-adenosyl-L-methionine-binding positions include Tyr-40, 65–67, 90–91, 122–123, Asn-137, and Arg-204; these read GAS, DN, and DI.

It belongs to the class I-like SAM-binding methyltransferase superfamily. Cx-SAM synthase family. As to quaternary structure, homodimer.

The enzyme catalyses prephenate + S-adenosyl-L-methionine = carboxy-S-adenosyl-L-methionine + 3-phenylpyruvate + H2O. Catalyzes the conversion of S-adenosyl-L-methionine (SAM) to carboxy-S-adenosyl-L-methionine (Cx-SAM). The chain is Carboxy-S-adenosyl-L-methionine synthase from Pseudomonas entomophila (strain L48).